Reading from the N-terminus, the 806-residue chain is Leucine--tRNA ligase (806 aa).

Residues 40–51 carry the 'HIGH' region motif; it reads PYPSGSGLHVGH. The short motif at 576–580 is the 'KMSKS' region element; that stretch reads KMSKS. K579 is a binding site for ATP.

Belongs to the class-I aminoacyl-tRNA synthetase family.

The protein localises to the cytoplasm. The enzyme catalyses tRNA(Leu) + L-leucine + ATP = L-leucyl-tRNA(Leu) + AMP + diphosphate. The polypeptide is Leucine--tRNA ligase (Chlorobium phaeobacteroides (strain BS1)).